Reading from the N-terminus, the 768-residue chain is cGMP-dependent protein kinase, isozyme 1 (768 aa).

The segment at 1 to 192 (MAAGMLTDRE…NDFLKNIDAS (192 aa)) is regulatory. Low complexity predominate over residues 114–127 (PLASTSSASPSGRT). Positions 114-134 (PLASTSSASPSGRTSADEVRP) are disordered. 3',5'-cyclic GMP-binding positions include 249–252 (GELA), 259–260 (RT), Arg366, 375–378 (GEQA), 385–386 (RT), and Tyr421. Residues 457–717 (LEVVSTLGIG…IQDIKKHKWF (261 aa)) enclose the Protein kinase domain. ATP-binding positions include 463–471 (LGIGGFGRV) and Lys488. Residue Asp582 is the Proton acceptor of the active site. Residues 718-768 (LGFDWDGLASQLLIPPFVRPIAHPTDVRYFDRFPCDLNEPPDELSGWDADF) form the AGC-kinase C-terminal domain.

The protein belongs to the protein kinase superfamily. AGC Ser/Thr protein kinase family. cGMP subfamily. As to quaternary structure, homodimer. The cofactor is Mg(2+). In terms of processing, autophosphorylated. In embryo stage 13, expression is seen in a few large, irregular cells having the appearance of hemocytes or macrophages. In adults, expression is seen in optic lamina and weakly in testis.

The catalysed reaction is L-seryl-[protein] + ATP = O-phospho-L-seryl-[protein] + ADP + H(+). It carries out the reaction L-threonyl-[protein] + ATP = O-phospho-L-threonyl-[protein] + ADP + H(+). Its activity is regulated as follows. Binding of cGMP results in enzyme activation. In Drosophila melanogaster (Fruit fly), this protein is cGMP-dependent protein kinase, isozyme 1 (Pkg21D).